A 478-amino-acid chain; its full sequence is UDP-N-acetylmuramate--L-alanine ligase (478 aa).

ATP is bound at residue 122–128; sequence GTHGKTT.

It belongs to the MurCDEF family.

It is found in the cytoplasm. It catalyses the reaction UDP-N-acetyl-alpha-D-muramate + L-alanine + ATP = UDP-N-acetyl-alpha-D-muramoyl-L-alanine + ADP + phosphate + H(+). It functions in the pathway cell wall biogenesis; peptidoglycan biosynthesis. In terms of biological role, cell wall formation. This Stenotrophomonas maltophilia (strain K279a) protein is UDP-N-acetylmuramate--L-alanine ligase.